A 317-amino-acid polypeptide reads, in one-letter code: MNLTFLDFEQPIADLESKINSLVELSQRDKTLNINKEINCLRKKSEDLTKKIFSNLNAWQITKIARHPMRPYALDYIKNIFTDFDELSGDRLYGDDKSIIGGIARLNSRPVMILGHQKGRETKEKIFRNFGMPTPEGYRKALRLMKIADRFNMPLITLIDTPGAYPGIEAEERGQASAIATNLREMSMLKIPIICTVIGEGGSGGALAIGVGDKINMMQYSIYSVISPEGCAAILWKNVDKAPIAAEEMGIIATRLKELNLIDNIIPEPLGGAHRNIKIITSNLKNRILKDLKELDKFTTSDLLNNRYKKLMSYGYN.

The region spanning 33-294 (NINKEINCLR…KNRILKDLKE (262 aa)) is the CoA carboxyltransferase C-terminal domain.

This sequence belongs to the AccA family. In terms of assembly, acetyl-CoA carboxylase is a heterohexamer composed of biotin carboxyl carrier protein (AccB), biotin carboxylase (AccC) and two subunits each of ACCase subunit alpha (AccA) and ACCase subunit beta (AccD).

It localises to the cytoplasm. It carries out the reaction N(6)-carboxybiotinyl-L-lysyl-[protein] + acetyl-CoA = N(6)-biotinyl-L-lysyl-[protein] + malonyl-CoA. Its pathway is lipid metabolism; malonyl-CoA biosynthesis; malonyl-CoA from acetyl-CoA: step 1/1. In terms of biological role, component of the acetyl coenzyme A carboxylase (ACC) complex. First, biotin carboxylase catalyzes the carboxylation of biotin on its carrier protein (BCCP) and then the CO(2) group is transferred by the carboxyltransferase to acetyl-CoA to form malonyl-CoA. The protein is Acetyl-coenzyme A carboxylase carboxyl transferase subunit alpha of Wigglesworthia glossinidia brevipalpis.